Reading from the N-terminus, the 240-residue chain is MIYSKVFLKLHWGFSVVKPLAAKAKPGFYLPPPTTLIGALSYGKFRGVDNINLGNVYGSPAYNFRNIMATARLESEGVYTEDIIRNVISYFQRKERRENPRYIYGVIPTGKVYIPNGRLVVVYVTDSISKEELEKLCWSITRIGCKECLASVENVEVGEAKKVSGRVKTRYYFRDTVKVVGRKEFLEYVTFWEENGYIWGKEGSPVRYILPITTYPLASKEVEVEAKEAYEVGGEYVVFS.

The protein belongs to the CRISPR-associated protein Cas5 family. Subtype I-A/Apern subfamily. Part of the aCascade ribonucleoprotein complex, minimally composed of Csa2 and Cas5a, which binds crRNA. Other possible components of aCascade in strain P1 are Cas6b (SSO1437) and Csa5 (SSO1443), while SSO1399, Cas5b (SSO1400) and SSO1401 have sometimes been seen weakly associated. Csa2 is probably the major RNA-binding subunit. The Csa2-Cas5a-crRNA complex also binds target DNA homologous to crRNA, probably forming an R-loop. Purified aCascade forms a filament about 6 nm in width.

Functionally, CRISPR (clustered regularly interspaced short palindromic repeat) is an adaptive immune system that provides protection against mobile genetic elements (viruses, transposable elements and conjugative plasmids). CRISPR clusters contain spacers, sequences complementary to antecedent mobile elements, and target invading nucleic acids. CRISPR clusters are transcribed and processed into CRISPR RNA (crRNA). The polypeptide is CRISPR system aCascade subunit Cas5 1 (cas5a) (Saccharolobus solfataricus (strain ATCC 35092 / DSM 1617 / JCM 11322 / P2) (Sulfolobus solfataricus)).